Reading from the N-terminus, the 271-residue chain is Formamidopyrimidine-DNA glycosylase (271 aa).

Proline 2 functions as the Schiff-base intermediate with DNA in the catalytic mechanism. Glutamate 3 functions as the Proton donor in the catalytic mechanism. Lysine 57 serves as the catalytic Proton donor; for beta-elimination activity. Positions 90, 109, and 151 each coordinate DNA. The FPG-type zinc finger occupies 236 to 270 (HVYGRGGETCTQCGNLLSEIRLGQRTTVFCSICQP). The active-site Proton donor; for delta-elimination activity is arginine 260.

It belongs to the FPG family. In terms of assembly, monomer. Zn(2+) is required as a cofactor.

The enzyme catalyses Hydrolysis of DNA containing ring-opened 7-methylguanine residues, releasing 2,6-diamino-4-hydroxy-5-(N-methyl)formamidopyrimidine.. It catalyses the reaction 2'-deoxyribonucleotide-(2'-deoxyribose 5'-phosphate)-2'-deoxyribonucleotide-DNA = a 3'-end 2'-deoxyribonucleotide-(2,3-dehydro-2,3-deoxyribose 5'-phosphate)-DNA + a 5'-end 5'-phospho-2'-deoxyribonucleoside-DNA + H(+). Involved in base excision repair of DNA damaged by oxidation or by mutagenic agents. Acts as a DNA glycosylase that recognizes and removes damaged bases. Has a preference for oxidized purines, such as 7,8-dihydro-8-oxoguanine (8-oxoG). Has AP (apurinic/apyrimidinic) lyase activity and introduces nicks in the DNA strand. Cleaves the DNA backbone by beta-delta elimination to generate a single-strand break at the site of the removed base with both 3'- and 5'-phosphates. The polypeptide is Formamidopyrimidine-DNA glycosylase (Shewanella oneidensis (strain ATCC 700550 / JCM 31522 / CIP 106686 / LMG 19005 / NCIMB 14063 / MR-1)).